Reading from the N-terminus, the 466-residue chain is Benzoate transport protein (466 aa).

At 1 to 22 (MSREINVNQMIDDSKLTPFHWR) the chain is on the cytoplasmic side. The helical transmembrane segment at 23 to 43 (VIILSTLIIIFDGYDLVIYGV) threads the bilayer. At 44–60 (ALPLLMKEWAIDPVTAG) the chain is on the periplasmic side. The helical transmembrane segment at 61 to 81 (FIGSIALFGMMFGALIFGTIA) threads the bilayer. Residues 82-93 (DKLEHLGVSRKK) lie on the Cytoplasmic side of the membrane. Residues 94 to 114 (VIAVCIILFSLCTVLCGFSET) traverse the membrane as a helical segment. Residues 115 to 119 (TTQFS) are Periplasmic-facing. A helical transmembrane segment spans residues 120–140 (IFRFLAGVGIGGVMPNVIALV). The Cytoplasmic segment spans residues 141 to 150 (SEYAPKKFKS). A helical membrane pass occupies residues 151–171 (FFVTLMFSGYAIGGMTAAFLG). The Periplasmic segment spans residues 172-181 (SILVPLYGWK). A helical membrane pass occupies residues 182–202 (IMFMIAGIPLVLLLPLMKVLP). Topologically, residues 203 to 258 (ESIDYLVRKKKDETVRFIMTKMVPSYQYQPDHVFVLNSSNQNQAQAPVKMIFQEQR) are cytoplasmic. A helical membrane pass occupies residues 259–279 (AFSTMMFWCSIFMTLIMVYAL). Residues 280–297 (GNWLPKLMIEAGYNLSKS) are Periplasmic-facing. The chain crosses the membrane as a helical span at residues 298–318 (LIFLFSLNVGGMIGSILGGYL). Topologically, residues 319-325 (ADRYNVK) are cytoplasmic. Residues 326–346 (FVTMGLLLLGAISLSLLSFQF) form a helical membrane-spanning segment. The Periplasmic segment spans residues 347 to 348 (SS). Residues 349 to 369 (VILYILIACAGAASIGAQIML) traverse the membrane as a helical segment. Over 370–387 (LAYMAKFYAPNVRSTGIG) the chain is Cytoplasmic. Residues 388-408 (WGLGMGRVGAILGPILTGWLL) traverse the membrane as a helical segment. The Periplasmic portion of the chain corresponds to 409–414 (SLQLPH). Residues 415–435 (FYNFLALSIPAVLGIVTVFLI) traverse the membrane as a helical segment. Residues 436-466 (NDRRMYQPEPISPIANQNDTTTVKVNEAVSH) lie on the Cytoplasmic side of the membrane.

This sequence belongs to the major facilitator superfamily. Aromatic acid:H(+) symporter (AAHS) (TC 2.A.1.15) family.

It localises to the cell inner membrane. Functionally, probable uptake of benzoate. In Acinetobacter baylyi (strain ATCC 33305 / BD413 / ADP1), this protein is Benzoate transport protein (benK).